Here is a 127-residue protein sequence, read N- to C-terminus: Small ribosomal subunit protein uS11 (127 aa).

Belongs to the universal ribosomal protein uS11 family. As to quaternary structure, part of the 30S ribosomal subunit. Interacts with proteins S7 and S18. Binds to IF-3.

Functionally, located on the platform of the 30S subunit, it bridges several disparate RNA helices of the 16S rRNA. Forms part of the Shine-Dalgarno cleft in the 70S ribosome. The chain is Small ribosomal subunit protein uS11 from Chlorobium luteolum (strain DSM 273 / BCRC 81028 / 2530) (Pelodictyon luteolum).